The chain runs to 87 residues: MKPNIHPEYRTVVFHDTSIDEYFRIGSTIKTDRVIELDGVTYPYVTIDVSSKSHPFYTGKLRTVASEGNVARFTQRFGRFVDAKKGG.

The protein belongs to the bacterial ribosomal protein bL31 family. Type B subfamily. As to quaternary structure, part of the 50S ribosomal subunit.

This is Large ribosomal subunit protein bL31B-2/bL31B-3 (rpmE2-2) from Escherichia coli O157:H7.